Here is a 362-residue protein sequence, read N- to C-terminus: Large ribosomal subunit protein uL4A (362 aa).

Serine 2 is modified (N-acetylserine). An Omega-N-methylarginine modification is found at arginine 95. The tract at residues 277–362 (PSHIISTSDV…AVFTETLKHD (86 aa)) is C-terminal-extended nuclear localization signal.

It belongs to the universal ribosomal protein uL4 family. As to quaternary structure, component of the large ribosomal subunit (LSU). Mature yeast ribosomes consist of a small (40S) and a large (60S) subunit. The 40S small subunit contains 1 molecule of ribosomal RNA (18S rRNA) and 33 different proteins (encoded by 57 genes). The large 60S subunit contains 3 rRNA molecules (25S, 5.8S and 5S rRNA) and 46 different proteins (encoded by 81 genes). uL4 is associated with the polypeptide exit tunnel. uL4 interacts with its chaperone ACL4 and the nuclear import receptor KAP104. In terms of processing, N-terminally acetylated by acetyltransferase NatA.

The protein localises to the cytoplasm. It localises to the nucleus. Functionally, component of the ribosome, a large ribonucleoprotein complex responsible for the synthesis of proteins in the cell. The small ribosomal subunit (SSU) binds messenger RNAs (mRNAs) and translates the encoded message by selecting cognate aminoacyl-transfer RNA (tRNA) molecules. The large subunit (LSU) contains the ribosomal catalytic site termed the peptidyl transferase center (PTC), which catalyzes the formation of peptide bonds, thereby polymerizing the amino acids delivered by tRNAs into a polypeptide chain. The nascent polypeptides leave the ribosome through a tunnel in the LSU and interact with protein factors that function in enzymatic processing, targeting, and the membrane insertion of nascent chains at the exit of the ribosomal tunnel. uL4 participates in the regulation of the accumulation of its own mRNA. In Saccharomyces cerevisiae (strain ATCC 204508 / S288c) (Baker's yeast), this protein is Large ribosomal subunit protein uL4A.